Reading from the N-terminus, the 187-residue chain is Major allergen Equ c 1 (187 aa).

Residues 1–15 (MKLLLLCLGLILVCA) constitute a signal peptide (or 16, or 21). Asn-53 and Asn-68 each carry an N-linked (GlcNAc...) asparagine glycan. A disulfide bridge connects residues Cys-83 and Cys-176.

It belongs to the calycin superfamily. Lipocalin family. As to quaternary structure, homodimer. Post-translationally, several N-terminal ends may be due to cleavage by signal peptidase at different sites or may be generated by proteolytic processing of the secreted protein. Analysis of the sugar composition shows the presence of GalNAc, Gal, NeuAc, GlcNAc, and Man. May be also O-glycosylated. Expressed in liver and in sublingual and submaxillary salivary glands. Highly concentrated in secretory fluid such as saliva and urine as well as in hair dandruff extract.

Its subcellular location is the secreted. The sequence is that of Major allergen Equ c 1 from Equus caballus (Horse).